Reading from the N-terminus, the 537-residue chain is Efflux pump ustT (537 aa).

A compositionally biased stretch (basic and acidic residues) spans 1–25 (MAKEAQSLHELDNMKEKEVDQEKKA). The disordered stretch occupies residues 1–50 (MAKEAQSLHELDNMKEKEVDQEKKAPTSVGDQEEHDDPKKQASHSQNVSE). Asparagine 47 is a glycosylation site (N-linked (GlcNAc...) asparagine). The next 8 helical transmembrane spans lie at 71 to 91 (PLAMAVIMVAISMGMFLVSLL), 104 to 124 (WVYMSLVFIFVIGSAVGAGAM), 137 to 157 (GIGLGGVLSGSTILIAENAPL), 162 to 182 (MFLGILMATMSISAIVGPLIG), 193 to 213 (WCFILNIPIGGAIIAVLFFFV), 236 to 256 (LGSALLLPAVVCLILALQWAG), 266 to 286 (IILLFVFGGLLSIGFVVSQML), and 304 to 324 (FGSFLFSAMTGGAMLVVTYWI). A glycan (N-linked (GlcNAc...) asparagine) is linked at asparagine 333. The next 4 helical transmembrane spans lie at 339-359 (AGIRTIALVLSQAVGAIMGGG), 363-383 (LIGYPPPIMMISATFIAVGAG), 397-417 (WIGYQILMGLGLGFGTQQASL), and 430-450 (TAISLIFFGMQLGGSIFVCIG). N-linked (GlcNAc...) asparagine glycosylation is present at asparagine 501. The chain crosses the membrane as a helical span at residues 507 to 527 (TFYVALAAGITSMLSAFLVQW).

This sequence belongs to the major facilitator superfamily. TCR/Tet family.

The protein localises to the cell membrane. Efflux pump; part of the gene cluster that mediates the biosynthesis of ustilaginoidins, dimeric gamma-naphthopyrones isolated from different fungal species. The chain is Efflux pump ustT from Ustilaginoidea virens (Rice false smut fungus).